The primary structure comprises 313 residues: Protoheme IX farnesyltransferase (313 aa).

The next 8 helical transmembrane spans lie at 34 to 54, 56 to 76, 105 to 125, 128 to 148, 152 to 172, 173 to 193, 237 to 257, and 291 to 311; these read VIEL…RGTV, PLLI…ANTL, HALI…WSTT, LSAH…TLLL, TSQN…IGWS, AVTG…FFWT, VLAT…VAIL, and YLAV…PTLL.

Belongs to the UbiA prenyltransferase family. Protoheme IX farnesyltransferase subfamily.

It is found in the cell membrane. It catalyses the reaction heme b + (2E,6E)-farnesyl diphosphate + H2O = Fe(II)-heme o + diphosphate. Its pathway is porphyrin-containing compound metabolism; heme O biosynthesis; heme O from protoheme: step 1/1. Functionally, converts heme B (protoheme IX) to heme O by substitution of the vinyl group on carbon 2 of heme B porphyrin ring with a hydroxyethyl farnesyl side group. The chain is Protoheme IX farnesyltransferase from Mycolicibacterium gilvum (strain PYR-GCK) (Mycobacterium gilvum (strain PYR-GCK)).